A 90-amino-acid polypeptide reads, in one-letter code: Probable Fe(2+)-trafficking protein (90 aa).

This sequence belongs to the Fe(2+)-trafficking protein family.

In terms of biological role, could be a mediator in iron transactions between iron acquisition and iron-requiring processes, such as synthesis and/or repair of Fe-S clusters in biosynthetic enzymes. The chain is Probable Fe(2+)-trafficking protein from Acinetobacter baylyi (strain ATCC 33305 / BD413 / ADP1).